A 173-amino-acid chain; its full sequence is Ribosome maturation factor RimM (173 aa).

Positions 95 to 169 constitute a PRC barrel domain; that stretch reads DPDEFYDHQL…VIEIDPPEGL (75 aa).

Belongs to the RimM family. Binds ribosomal protein uS19.

The protein localises to the cytoplasm. An accessory protein needed during the final step in the assembly of 30S ribosomal subunit, possibly for assembly of the head region. Essential for efficient processing of 16S rRNA. May be needed both before and after RbfA during the maturation of 16S rRNA. It has affinity for free ribosomal 30S subunits but not for 70S ribosomes. The polypeptide is Ribosome maturation factor RimM (Mycobacteroides abscessus (strain ATCC 19977 / DSM 44196 / CCUG 20993 / CIP 104536 / JCM 13569 / NCTC 13031 / TMC 1543 / L948) (Mycobacterium abscessus)).